Here is a 259-residue protein sequence, read N- to C-terminus: Glycerol-3-phosphate acyltransferase (259 aa).

The next 7 helical transmembrane spans lie at 11–31 (IILA…IIIV), 62–82 (LVVA…AILL), 93–112 (TSYF…PIYY), 124–144 (LGLL…VWFI), 152–172 (VSVA…IPYL), 188–208 (FSVA…HYWF), and 211–231 (IWAS…LILG).

It belongs to the PlsY family. In terms of assembly, probably interacts with PlsX.

The protein localises to the cell membrane. It catalyses the reaction an acyl phosphate + sn-glycerol 3-phosphate = a 1-acyl-sn-glycero-3-phosphate + phosphate. Its pathway is lipid metabolism; phospholipid metabolism. In terms of biological role, catalyzes the transfer of an acyl group from acyl-phosphate (acyl-PO(4)) to glycerol-3-phosphate (G3P) to form lysophosphatidic acid (LPA). This enzyme utilizes acyl-phosphate as fatty acyl donor, but not acyl-CoA or acyl-ACP. In Mycoplasma capricolum subsp. capricolum (strain California kid / ATCC 27343 / NCTC 10154), this protein is Glycerol-3-phosphate acyltransferase.